Reading from the N-terminus, the 602-residue chain is DNA damage-binding protein CMR1 (602 aa).

The interval 35–85 (KEVDNKSFSSPSSQKRRKTTKKPVIKKEISEPSRRSRRIAGIKSELEDPKQ) is disordered. Over residues 48 to 58 (QKRRKTTKKPV) the composition is skewed to basic residues. Residues 59-68 (IKKEISEPSR) show a composition bias toward basic and acidic residues. WD repeat units follow at residues 229–270 (ICHN…NDTK), 291–328 (RNVS…STEL), 390–430 (LHDK…KSVY), 446–484 (NSRL…KLDN), 526–569 (GRWV…LAHL), and 571–602 (EQVG…YLFE).

It belongs to the WD repeat DDB2/WDR76 family.

Functionally, DNA-binding protein that binds to both single- and double-stranded DNA. Binds preferentially to UV-damaged DNA. May be involved in DNA-metabolic processes. The polypeptide is DNA damage-binding protein CMR1 (Candida albicans (strain SC5314 / ATCC MYA-2876) (Yeast)).